The chain runs to 2212 residues: Nonribosomal peptide synthetase ftmPS (2212 aa).

The adenylation 1 stretch occupies residues 74–473 (TYAELDSLSD…IEHHLQQTLP (400 aa)). Residues 592 to 669 (PPSTLKETTI…EQSQRAGLIQ (78 aa)) form the Carrier 1 domain. At serine 629 the chain carries O-(pantetheine 4'-phosphoryl)serine. The interval 708–973 (EDIYPCTALQ…IATVPLRIRV (266 aa)) is condensation 1. The adenylation 2 stretch occupies residues 1167 to 1564 (TYRELWAHSS…LSAVEASLMR (398 aa)). The region spanning 1678–1757 (PMSDDNERRL…QFRHLITEDD (80 aa)) is the Carrier 2 domain. Serine 1715 is modified (O-(pantetheine 4'-phosphoryl)serine). The condensation 2 stretch occupies residues 1815–2070 (HFQFDLSGAI…CTNYIPYRLS (256 aa)).

Belongs to the NRP synthetase family.

The catalysed reaction is L-proline + L-tryptophan + 2 ATP = brevianamide F + 2 AMP + 2 diphosphate + 2 H(+). It functions in the pathway mycotoxin biosynthesis. Nonribosomal peptide synthetase; part of the gene cluster that mediates the biosynthesis of fumitremorgins, indole alkaloids that carry not only intriguing chemical structures, but also interesting biological and pharmacological activities. The biosynthesis of fumitremorgin-type alkaloids begins by condensation of the two amino acids L-tryptophan and L-proline to brevianamide F, catalyzed by the non-ribosomal peptide synthetase ftmPS/ftmA. Brevianamide F is then prenylated by the prenyltransferase ftmPT1/ftmB in the presence of dimethylallyl diphosphate, resulting in the formation of tryprostatin B. The three cytochrome P450 monooxygenases, ftmP450-1/ftmC, ftmP450-2/ftmE and ftmP450-3/FtmG, are responsible for the conversion of tryprostatin B to 6-hydroxytryprostatin B, tryprostatin A to fumitremorgin C and fumitremorgin C to 12,13-dihydroxyfumitremorgin C, respectively. The putative methyltransferase ftmMT/ftmD is expected for the conversion of 6-hydroxytryprostatin B to tryprostatin A. FtmPT2/FtmH catalyzes the prenylation of 12,13-dihydroxyfumitre-morgin C in the presence of dimethylallyl diphosphate, resulting in the formation of fumitremorgin B. Fumitremorgin B is further converted to verruculogen by ftmOx1/ftmF via the insertion of an endoperoxide bond between the two prenyl moieties. Finally, verruculogen is further converted to fumitremorgin A by the verruculogen prenyltransferase ftmPT3. This chain is Nonribosomal peptide synthetase ftmPS (ftmPS), found in Neosartorya fischeri (strain ATCC 1020 / DSM 3700 / CBS 544.65 / FGSC A1164 / JCM 1740 / NRRL 181 / WB 181) (Aspergillus fischerianus).